The primary structure comprises 144 residues: Eukaryotic translation initiation factor 1A, Y-chromosomal (144 aa).

Residues 1–15 show a composition bias toward basic residues; that stretch reads MPKNKGKGGKNRRRG. The disordered stretch occupies residues 1 to 26; sequence MPKNKGKGGKNRRRGKNENESEKREL. Residues 16 to 26 are compositionally biased toward basic and acidic residues; that stretch reads KNENESEKREL. In terms of domain architecture, S1-like spans 22–96; sequence EKRELVFKED…NKADVILKYN (75 aa). Lys-88 participates in a covalent cross-link: Glycyl lysine isopeptide (Lys-Gly) (interchain with G-Cter in ubiquitin). The interval 114–144 is disordered; that stretch reads KINETDTFGPGDDDEVQFDDIGDDDEDIDDI. A compositionally biased stretch (acidic residues) spans 124–144; the sequence is GDDDEVQFDDIGDDDEDIDDI.

The protein belongs to the eIF-1A family. As to quaternary structure, component of the 43S pre-initiation complex (43S PIC), which is composed of the 40S ribosomal subunit, EIF1, eIF1A (EIF1AX), eIF3 complex, EIF5 and eIF2-GTP-initiator tRNA complex (eIF2 ternary complex). Interacts with EIF5; this interaction contributes to the maintenance of EIF1 within the open 43S PIC. Interacts through its C-terminal domain (CTD) with the CTD of EIF5B; from the location of the start codon by the 43S complex until the formation of the 80S complex. In terms of tissue distribution, ubiquitous.

Its subcellular location is the cytoplasm. Functionally, component of the 43S pre-initiation complex (43S PIC), which binds to the mRNA cap-proximal region, scans mRNA 5'-untranslated region, and locates the initiation codon. This protein enhances formation of the cap-proximal complex. Together with EIF1, facilitates scanning, start codon recognition, promotion of the assembly of 48S complex at the initiation codon (43S PIC becomes 48S PIC after the start codon is reached), and dissociation of aberrant complexes. After start codon location, together with EIF5B orients the initiator methionine-tRNA in a conformation that allows 60S ribosomal subunit joining to form the 80S initiation complex. Is released after 80S initiation complex formation, just after GTP hydrolysis by EIF5B, and before release of EIF5B. Its globular part is located in the A site of the 40S ribosomal subunit. Its interaction with EIF5 during scanning contribute to the maintenance of EIF1 within the open 43S PIC. In contrast to yeast orthologs, does not bind EIF1. This Pan troglodytes (Chimpanzee) protein is Eukaryotic translation initiation factor 1A, Y-chromosomal (EIF1AY).